Here is a 310-residue protein sequence, read N- to C-terminus: Glutaminase (310 aa).

Substrate is bound by residues Ser-67, Asn-118, Glu-161, Asn-168, Tyr-192, Tyr-244, and Val-262.

The protein belongs to the glutaminase family. In terms of assembly, homotetramer.

The catalysed reaction is L-glutamine + H2O = L-glutamate + NH4(+). The sequence is that of Glutaminase from Legionella pneumophila subsp. pneumophila (strain Philadelphia 1 / ATCC 33152 / DSM 7513).